The sequence spans 522 residues: Subtilisin-like protease 10 (522 aa).

The N-terminal stretch at 1–19 is a signal peptide; sequence MFFFKGVVAVLSFFSAVNA. A propeptide spanning residues 20 to 117 is cleaved from the precursor; sequence APFMKPNNGT…VERDQIGTSQ (98 aa). Positions 36–113 constitute an Inhibitor I9 domain; that stretch reads SYIVLLKRDI…HVAHVERDQI (78 aa). A Peptidase S8 domain is found at 127–405; sequence NWGLGRLSNN…KLLVNGANGT (279 aa). Residues D159 and H190 each act as charge relay system in the active site. A glycan (N-linked (GlcNAc...) asparagine) is linked at N251. Residue S348 is the Charge relay system of the active site. Residues 384 to 397 show a composition bias toward polar residues; sequence ASVKNPGPNTTNKL. The disordered stretch occupies residues 384 to 515; it reads ASVKNPGPNT…GWNRPMWWNR (132 aa). N-linked (GlcNAc...) asparagine glycosylation is found at N392 and N403. A compositionally biased stretch (pro residues) spans 432-459; that stretch reads SQNPPPGQNPPPGQNPPPEQPAPSPPAN.

The protein belongs to the peptidase S8 family.

The protein resides in the secreted. In terms of biological role, secreted subtilisin-like serine protease with keratinolytic activity that contributes to pathogenicity. The chain is Subtilisin-like protease 10 (SUB10) from Arthroderma benhamiae (strain ATCC MYA-4681 / CBS 112371) (Trichophyton mentagrophytes).